The following is a 443-amino-acid chain: ATP-dependent protease ATPase subunit HslU (443 aa).

Residues Ile-18, 60–65 (GVGKTE), Asp-256, Glu-321, and Arg-393 contribute to the ATP site.

The protein belongs to the ClpX chaperone family. HslU subfamily. A double ring-shaped homohexamer of HslV is capped on each side by a ring-shaped HslU homohexamer. The assembly of the HslU/HslV complex is dependent on binding of ATP.

Its subcellular location is the cytoplasm. In terms of biological role, ATPase subunit of a proteasome-like degradation complex; this subunit has chaperone activity. The binding of ATP and its subsequent hydrolysis by HslU are essential for unfolding of protein substrates subsequently hydrolyzed by HslV. HslU recognizes the N-terminal part of its protein substrates and unfolds these before they are guided to HslV for hydrolysis. This Wigglesworthia glossinidia brevipalpis protein is ATP-dependent protease ATPase subunit HslU.